The sequence spans 541 residues: Carboxypeptidase Y homolog A (541 aa).

The first 17 residues, 1–17 (MKVATSALLIGAAAAQQ), serve as a signal peptide directing secretion. Positions 18-125 (QQILKFPDSF…KLEQYSLRAK (108 aa)) are excised as a propeptide. 5 cysteine pairs are disulfide-bonded: Cys-179–Cys-418, Cys-313–Cys-327, Cys-337–Cys-360, Cys-344–Cys-353, and Cys-382–Cys-388. A glycan (N-linked (GlcNAc...) asparagine) is linked at Asn-210. Residue Ser-266 is part of the active site. Residue Asp-457 is part of the active site. N-linked (GlcNAc...) asparagine glycosylation occurs at Asn-505. His-516 is an active-site residue.

It belongs to the peptidase S10 family.

It localises to the vacuole. It carries out the reaction Release of a C-terminal amino acid with broad specificity.. Vacuolar carboxypeptidase involved in degradation of small peptides. Digests preferentially peptides containing an aliphatic or hydrophobic residue in P1' position, as well as methionine, leucine or phenylalanine in P1 position of ester substrate. The polypeptide is Carboxypeptidase Y homolog A (cpyA) (Pyrenophora tritici-repentis (strain Pt-1C-BFP) (Wheat tan spot fungus)).